We begin with the raw amino-acid sequence, 360 residues long: Histidinol-phosphate aminotransferase (360 aa).

K221 is modified (N6-(pyridoxal phosphate)lysine).

Belongs to the class-II pyridoxal-phosphate-dependent aminotransferase family. Histidinol-phosphate aminotransferase subfamily. Homodimer. Requires pyridoxal 5'-phosphate as cofactor.

It carries out the reaction L-histidinol phosphate + 2-oxoglutarate = 3-(imidazol-4-yl)-2-oxopropyl phosphate + L-glutamate. It participates in amino-acid biosynthesis; L-histidine biosynthesis; L-histidine from 5-phospho-alpha-D-ribose 1-diphosphate: step 7/9. The protein is Histidinol-phosphate aminotransferase of Desulfitobacterium hafniense (strain DSM 10664 / DCB-2).